A 284-amino-acid polypeptide reads, in one-letter code: Phosphatidylglycerol--prolipoprotein diacylglyceryl transferase (284 aa).

7 helical membrane passes run 21–41 (IEVHWYGLAYACAIVVAFYMA), 62–82 (YFLWAELGIVLGARVGYILIY), 106–126 (FVGIRGMSYHGGLVGFLIASY), 136–156 (LLIYLDLIAISLPLGYVFGRI), 190–210 (PSQLIEAFLEGVIVFLMVMWA), 218–238 (GLLIVVYGLGYSLMRFIAEFY), and 252–272 (LSMGQILSLFMVIVSLGILLY). Arg155 is an a 1,2-diacyl-sn-glycero-3-phospho-(1'-sn-glycerol) binding site.

This sequence belongs to the Lgt family.

Its subcellular location is the cell inner membrane. The enzyme catalyses L-cysteinyl-[prolipoprotein] + a 1,2-diacyl-sn-glycero-3-phospho-(1'-sn-glycerol) = an S-1,2-diacyl-sn-glyceryl-L-cysteinyl-[prolipoprotein] + sn-glycerol 1-phosphate + H(+). The protein operates within protein modification; lipoprotein biosynthesis (diacylglyceryl transfer). Catalyzes the transfer of the diacylglyceryl group from phosphatidylglycerol to the sulfhydryl group of the N-terminal cysteine of a prolipoprotein, the first step in the formation of mature lipoproteins. The polypeptide is Phosphatidylglycerol--prolipoprotein diacylglyceryl transferase (Helicobacter pylori (strain P12)).